We begin with the raw amino-acid sequence, 396 residues long: NADH-quinone oxidoreductase subunit D (396 aa).

Belongs to the complex I 49 kDa subunit family. NDH-1 is composed of 14 different subunits. Subunits NuoB, C, D, E, F, and G constitute the peripheral sector of the complex.

It localises to the cell inner membrane. The enzyme catalyses a quinone + NADH + 5 H(+)(in) = a quinol + NAD(+) + 4 H(+)(out). NDH-1 shuttles electrons from NADH, via FMN and iron-sulfur (Fe-S) centers, to quinones in the respiratory chain. The immediate electron acceptor for the enzyme in this species is believed to be ubiquinone. Couples the redox reaction to proton translocation (for every two electrons transferred, four hydrogen ions are translocated across the cytoplasmic membrane), and thus conserves the redox energy in a proton gradient. The protein is NADH-quinone oxidoreductase subunit D of Brucella canis (strain ATCC 23365 / NCTC 10854 / RM-666).